A 344-amino-acid polypeptide reads, in one-letter code: UPF0283 membrane protein YcjF (344 aa).

3 helical membrane-spanning segments follow: residues 70–90 (MVMG…VQWT), 100–120 (VALG…GSVV), and 213–233 (ESTL…FIAW).

This sequence belongs to the UPF0283 family.

It is found in the cell inner membrane. The chain is UPF0283 membrane protein YcjF from Shigella dysenteriae serotype 1 (strain Sd197).